A 205-amino-acid chain; its full sequence is Imidazole glycerol phosphate synthase subunit HisH (205 aa).

One can recognise a Glutamine amidotransferase type-1 domain in the interval 3-205 (KIGLIDYGMG…LLRRWLSNIQ (203 aa)). Cys-81 serves as the catalytic Nucleophile. Active-site residues include His-185 and Glu-187.

As to quaternary structure, heterodimer of HisH and HisF.

The protein resides in the cytoplasm. The enzyme catalyses 5-[(5-phospho-1-deoxy-D-ribulos-1-ylimino)methylamino]-1-(5-phospho-beta-D-ribosyl)imidazole-4-carboxamide + L-glutamine = D-erythro-1-(imidazol-4-yl)glycerol 3-phosphate + 5-amino-1-(5-phospho-beta-D-ribosyl)imidazole-4-carboxamide + L-glutamate + H(+). The catalysed reaction is L-glutamine + H2O = L-glutamate + NH4(+). It functions in the pathway amino-acid biosynthesis; L-histidine biosynthesis; L-histidine from 5-phospho-alpha-D-ribose 1-diphosphate: step 5/9. In terms of biological role, IGPS catalyzes the conversion of PRFAR and glutamine to IGP, AICAR and glutamate. The HisH subunit catalyzes the hydrolysis of glutamine to glutamate and ammonia as part of the synthesis of IGP and AICAR. The resulting ammonia molecule is channeled to the active site of HisF. This is Imidazole glycerol phosphate synthase subunit HisH from Prochlorococcus marinus (strain MIT 9312).